Consider the following 306-residue polypeptide: Galactosylgalactosylxylosylprotein 3-beta-glucuronosyltransferase I (306 aa).

The Cytoplasmic portion of the chain corresponds to 1-11 (MSEVRIRPRQV). Residues 12 to 29 (LILIIVFLVVLMMVHRNG) form a helical; Signal-anchor for type II membrane protein membrane-spanning segment. Topologically, residues 30 to 306 (KRTCQGPEYL…GQRSDGGMEV (277 aa)) are lumenal. Residue Asn-90 is glycosylated (N-linked (GlcNAc...) asparagine). Asp-163 is a Mn(2+) binding site. Glu-252 functions as the Proton acceptor in the catalytic mechanism.

Belongs to the glycosyltransferase 43 family. Mn(2+) is required as a cofactor.

The protein localises to the golgi apparatus membrane. It carries out the reaction 3-O-(beta-D-galactosyl-(1-&gt;3)-beta-D-galactosyl-(1-&gt;4)-beta-D-xylosyl)-L-seryl-[protein] + UDP-alpha-D-glucuronate = 3-O-(beta-D-GlcA-(1-&gt;3)-beta-D-Gal-(1-&gt;3)-beta-D-Gal-(1-&gt;4)-beta-D-Xyl)-L-seryl-[protein] + UDP + H(+). Its pathway is protein modification; protein glycosylation. In terms of biological role, involved in the biosynthesis of L2/HNK-1 carbohydrate epitope on both glycolipids and glycoproteins. Shows strict specificity for Gal-beta-1,3-Gal-beta-1,4-Xyl, exhibiting negligible incorporation into other galactoside substrates. The polypeptide is Galactosylgalactosylxylosylprotein 3-beta-glucuronosyltransferase I (GlcAT-I) (Drosophila melanogaster (Fruit fly)).